Here is a 423-residue protein sequence, read N- to C-terminus: GTPase Obg (423 aa).

One can recognise an Obg domain in the interval 1–158 (MFIDTARIYI…MWVRLELKLL (158 aa)). The region spanning 159-329 (ADVGLIGFPN…LLDKTIEILS (171 aa)) is the OBG-type G domain. Residues 165–172 (GFPNAGKS), 190–194 (FTTLT), 211–214 (DIPG), 281–284 (NKID), and 310–312 (SAL) each bind GTP. Mg(2+) is bound by residues S172 and T192. Residues 346–423 (TPPEEEETLN…VRDFEFEYYE (78 aa)) enclose the OCT domain.

It belongs to the TRAFAC class OBG-HflX-like GTPase superfamily. OBG GTPase family. In terms of assembly, monomer. Mg(2+) is required as a cofactor.

It is found in the cytoplasm. Functionally, an essential GTPase which binds GTP, GDP and possibly (p)ppGpp with moderate affinity, with high nucleotide exchange rates and a fairly low GTP hydrolysis rate. Plays a role in control of the cell cycle, stress response, ribosome biogenesis and in those bacteria that undergo differentiation, in morphogenesis control. The chain is GTPase Obg from Thermoanaerobacter pseudethanolicus (strain ATCC 33223 / 39E) (Clostridium thermohydrosulfuricum).